The primary structure comprises 276 residues: Large ribosomal subunit protein uL2 (276 aa).

Disordered regions lie at residues V30 to R52 and V224 to K257. A compositionally biased stretch (polar residues) spans G41–R52.

This sequence belongs to the universal ribosomal protein uL2 family. As to quaternary structure, part of the 50S ribosomal subunit. Forms a bridge to the 30S subunit in the 70S ribosome.

Functionally, one of the primary rRNA binding proteins. Required for association of the 30S and 50S subunits to form the 70S ribosome, for tRNA binding and peptide bond formation. It has been suggested to have peptidyltransferase activity; this is somewhat controversial. Makes several contacts with the 16S rRNA in the 70S ribosome. The sequence is that of Large ribosomal subunit protein uL2 from Gluconacetobacter diazotrophicus (strain ATCC 49037 / DSM 5601 / CCUG 37298 / CIP 103539 / LMG 7603 / PAl5).